Reading from the N-terminus, the 1008-residue chain is Serine/threonine-protein kinase PRP4 homolog (1008 aa).

The segment at 1–103 is disordered; the sequence is MAAAEAPSLR…PAKRTKLDDL (103 aa). Position 2 is an N-acetylalanine (Ala2). Residues Ser8, Ser20, Ser23, and Ser32 each carry the phosphoserine modification. Composition is skewed to basic residues over residues 39–59 and 67–81; these read KHSR…KHKH and RKHK…HKRK. Residues 82–91 are compositionally biased toward basic and acidic residues; sequence EVADASDKEG. Residues Ser87 and Ser93 each carry the phosphoserine modification. The residue at position 99 (Lys99) is an N6-acetyllysine; alternate. Residue Lys99 forms a Glycyl lysine isopeptide (Lys-Gly) (interchain with G-Cter in SUMO2); alternate linkage. Lys111 participates in a covalent cross-link: Glycyl lysine isopeptide (Lys-Gly) (interchain with G-Cter in SUMO2). A Glycyl lysine isopeptide (Lys-Gly) (interchain with G-Cter in SUMO2); alternate cross-link involves residue Lys117. A Glycyl lysine isopeptide (Lys-Gly) (interchain with G-Cter in SUMO1); alternate cross-link involves residue Lys117. Ser131 carries the post-translational modification Phosphoserine. Residue Tyr140 is modified to Phosphotyrosine. 2 disordered regions span residues 140 to 536 and 560 to 584; these read YESG…EDEE and SNLS…SPDD. 3 positions are modified to phosphoserine: Ser142, Ser144, and Ser166. Low complexity predominate over residues 157-168; the sequence is GNRSSTRSSSTK. Residues Lys170 and Lys177 each participate in a glycyl lysine isopeptide (Lys-Gly) (interchain with G-Cter in SUMO2) cross-link. Basic residues-rich tracts occupy residues 179–202 and 214–230; these read STKK…KKSK and RSKS…SKRS. Phosphoserine occurs at positions 239, 241, 257, 277, 283, 292, and 294. Over residues 247-270 the composition is skewed to basic and acidic residues; it reads RSQEKVGKARSPVDDKAKVEDKSK. Residues 302 to 315 are compositionally biased toward basic residues; that stretch reads SKDRRSRSKERKSK. Residues 316 to 325 show a composition bias toward basic and acidic residues; sequence RPEADKEKKP. Phosphoserine occurs at positions 328, 354, 356, 366, and 368. The span at 342–367 shows a compositional bias: basic residues; the sequence is PSRRPGRSPKRRSLSPKQRDKSRRSR. Thr385 carries the post-translational modification Phosphothreonine. Ser387 carries the phosphoserine modification. Basic and acidic residues-rich tracts occupy residues 395–408 and 415–429; these read RSLE…ERRR and RPRD…RSKD. Ser427, Ser431, and Ser437 each carry phosphoserine. The segment covering 438 to 498 has biased composition (basic residues); it reads PARRRASRSP…RGGRRRRSRS (61 aa). Phosphoserine is present on residues Ser519, Ser520, Ser521, Ser566, Ser570, Ser577, Ser579, and Ser581. Positions 519-536 are enriched in acidic residues; sequence SSSDDNLEDFDVEEEDEE. The segment covering 563-582 has biased composition (low complexity); the sequence is SVPSEPSSPQSSTRSRSPSP. Residues Lys594 and Lys660 each participate in a glycyl lysine isopeptide (Lys-Gly) (interchain with G-Cter in SUMO2) cross-link. The Protein kinase domain occupies 688-1004; the sequence is YNVYGYTGQG…INQALQHAFI (317 aa). ATP is bound by residues 694–702 and Lys718; that span reads TGQGVFSNV. Residue Lys718 is modified to N6-acetyllysine. The Proton acceptor role is filled by Asp816. Phosphotyrosine is present on Tyr850. Ser853 carries the phosphoserine modification.

The protein belongs to the protein kinase superfamily. CMGC Ser/Thr protein kinase family. Interacts with CLK1 C-terminus. Associates with the U5 snRNP and NCOR1 deacetylase complexes. Identified in the spliceosome C complex. In terms of processing, phosphorylated by CLK1. Autophosphorylated; phosphorylation inhibits interaction with its targets, such as PRPF6 or SMARCA4.

It is found in the nucleus. Its subcellular location is the chromosome. It localises to the centromere. The protein resides in the kinetochore. It catalyses the reaction L-seryl-[protein] + ATP = O-phospho-L-seryl-[protein] + ADP + H(+). It carries out the reaction L-threonyl-[protein] + ATP = O-phospho-L-threonyl-[protein] + ADP + H(+). Functionally, serine/threonine kinase involved in spliceosomal assembly as well as mitosis and signaling regulation. Connects chromatin mediated regulation of transcription and pre-mRNA splicing. During spliceosomal assembly, interacts with and phosphorylates PRPF6 and PRPF31, components of the U4/U6-U5 tri-small nuclear ribonucleoprotein (snRNP), to facilitate the formation of the spliceosome B complex. Plays a role in regulating transcription and the spindle assembly checkpoint (SAC). Associates with U5 snRNP and NCOR1 deacetylase complexes which may allow a coordination of pre-mRNA splicing with chromatin remodeling events involved in transcriptional regulation. Associates and probably phosphorylates SMARCA4 and NCOR1. Phosphorylates SRSF1. Associates with kinetochores during mitosis and is necessary for recruitment and maintenance of the checkpoint proteins such as MAD1L1 and MAD12L1 at the kinetochores. Phosphorylates and regulates the activity of the transcription factors such as ELK1 and KLF13. Phosphorylates nuclear YAP1 and WWTR1/TAZ which induces nuclear exclusion and regulates Hippo signaling pathway, involved in tissue growth control. The sequence is that of Serine/threonine-protein kinase PRP4 homolog (PRP4K) from Bos taurus (Bovine).